A 114-amino-acid chain; its full sequence is Flagellar hook-basal body complex protein FliE (114 aa).

It belongs to the FliE family.

It localises to the bacterial flagellum basal body. The polypeptide is Flagellar hook-basal body complex protein FliE (Burkholderia cenocepacia (strain ATCC BAA-245 / DSM 16553 / LMG 16656 / NCTC 13227 / J2315 / CF5610) (Burkholderia cepacia (strain J2315))).